We begin with the raw amino-acid sequence, 160 residues long: Dihydrofolate reductase (160 aa).

One can recognise a DHFR domain in the interval 2-159; the sequence is TFSLIVATTL…YDCRFLILTR (158 aa). Position 6 (isoleucine 6) interacts with substrate. NADP(+) contacts are provided by residues alanine 8 and 14–20; that span reads VIGKDNQ. Position 28 (aspartate 28) interacts with substrate. 46–47 provides a ligand contact to NADP(+); the sequence is KT. Residues arginine 53 and arginine 58 each contribute to the substrate site. NADP(+) contacts are provided by residues 64-65 and 96-103; these read SR and GGGELFKQ. A substrate-binding site is contributed by threonine 114.

This sequence belongs to the dihydrofolate reductase family.

It carries out the reaction (6S)-5,6,7,8-tetrahydrofolate + NADP(+) = 7,8-dihydrofolate + NADPH + H(+). It participates in cofactor biosynthesis; tetrahydrofolate biosynthesis; 5,6,7,8-tetrahydrofolate from 7,8-dihydrofolate: step 1/1. In terms of biological role, key enzyme in folate metabolism. Catalyzes an essential reaction for de novo glycine and purine synthesis, and for DNA precursor synthesis. In Haemophilus influenzae (strain ATCC 51907 / DSM 11121 / KW20 / Rd), this protein is Dihydrofolate reductase (folA).